Reading from the N-terminus, the 514-residue chain is 2-isopropylmalate synthase (514 aa).

The 263-residue stretch at 5–267 folds into the Pyruvate carboxyltransferase domain; that stretch reads VIIFDTTLRD…ETNIKHEEIH (263 aa). Aspartate 14, histidine 202, histidine 204, and asparagine 238 together coordinate Mn(2+). The interval 392–514 is regulatory domain; sequence KLNYLSVQSG…AEIKERIATV (123 aa).

It belongs to the alpha-IPM synthase/homocitrate synthase family. LeuA type 1 subfamily. Homodimer. Mn(2+) serves as cofactor.

The protein resides in the cytoplasm. The catalysed reaction is 3-methyl-2-oxobutanoate + acetyl-CoA + H2O = (2S)-2-isopropylmalate + CoA + H(+). It participates in amino-acid biosynthesis; L-leucine biosynthesis; L-leucine from 3-methyl-2-oxobutanoate: step 1/4. Its function is as follows. Catalyzes the condensation of the acetyl group of acetyl-CoA with 3-methyl-2-oxobutanoate (2-ketoisovalerate) to form 3-carboxy-3-hydroxy-4-methylpentanoate (2-isopropylmalate). In Photobacterium profundum (strain SS9), this protein is 2-isopropylmalate synthase.